The sequence spans 181 residues: Lysozyme A (181 aa).

The first 19 residues, 1-19 (MRIAFFLLVLAVIIGFAYG), serve as a signal peptide directing secretion. The propeptide occupies 139–181 (LTDSRPLGPFNVTESEMAQLFIDHEIAMAQCEAEKTCNGFDLE).

Belongs to the dictyostelium lysozyme family. Post-translationally, contains six disulfide bonds.

The protein resides in the cytoplasmic vesicle lumen. It catalyses the reaction Hydrolysis of 1,4-beta-linkages between N-acetylmuramic acid and N-acetyl-D-glucosamine residues in a peptidoglycan.. Has antibacterial activity against the Gram-positive bacteria B.subtilis, B.megaterium and M.luteus. No antibacterial activity detected against the Gram-positive bacterium S.aureus or against the Gram-negative bacterium E.coli. Lacks chitinase activity. This chain is Lysozyme A, found in Dictyostelium discoideum (Social amoeba).